A 330-amino-acid polypeptide reads, in one-letter code: HPr kinase/phosphorylase (330 aa).

Catalysis depends on residues His153 and Lys174. Position 168 to 175 (168 to 175 (GKSGLGKS)) interacts with ATP. Ser175 lines the Mg(2+) pocket. The Proton acceptor; for phosphorylation activity. Proton donor; for dephosphorylation activity role is filled by Asp192. The segment at 217–226 (MEIRGLGVVD) is important for the catalytic mechanism of both phosphorylation and dephosphorylation. Position 218 (Glu218) interacts with Mg(2+). The active site involves Arg259. The segment at 280–285 (PIFPGK) is important for the catalytic mechanism of dephosphorylation.

This sequence belongs to the HPrK/P family. Homohexamer. The cofactor is Mg(2+).

The enzyme catalyses [HPr protein]-L-serine + ATP = [HPr protein]-O-phospho-L-serine + ADP + H(+). It catalyses the reaction [HPr protein]-O-phospho-L-serine + phosphate + H(+) = [HPr protein]-L-serine + diphosphate. In terms of biological role, catalyzes the ATP- as well as the pyrophosphate-dependent phosphorylation of a specific serine residue in HPr, a phosphocarrier protein of the phosphoenolpyruvate-dependent sugar phosphotransferase system (PTS). HprK/P also catalyzes the pyrophosphate-producing, inorganic phosphate-dependent dephosphorylation (phosphorolysis) of seryl-phosphorylated HPr (P-Ser-HPr). This Chlorobium limicola (strain DSM 245 / NBRC 103803 / 6330) protein is HPr kinase/phosphorylase.